A 191-amino-acid polypeptide reads, in one-letter code: Uridylate kinase (191 aa).

An ATP-binding site is contributed by 12 to 17 (GAGKGT). The segment at 33-63 (SAGDCLREEQNRPGSKYGNLIKEYIKDGKIV) is NMP. Residues Arg-39, 61-63 (KIV), 91-94 (GFPR), and Gln-98 contribute to the a ribonucleoside 5'-phosphate site. The segment at 128–138 (HRGKTSGRSDD) is LID. Arg-129 serves as a coordination point for ATP. Positions 135 and 146 each coordinate a ribonucleoside 5'-phosphate. Gln-174 lines the ATP pocket.

The protein belongs to the adenylate kinase family. UMP-CMP kinase subfamily. As to quaternary structure, monomer. Requires Mg(2+) as cofactor.

It localises to the cytoplasm. The protein localises to the nucleus. It carries out the reaction UMP + ATP = UDP + ADP. Catalyzes the phosphorylation of pyrimidine nucleoside monophosphates at the expense of ATP. Plays an important role in de novo pyrimidine nucleotide biosynthesis. Has preference for UMP and dUMP as phosphate acceptors, but can also use CMP, dCMP and AMP. This is Uridylate kinase from Schizosaccharomyces pombe (strain 972 / ATCC 24843) (Fission yeast).